Consider the following 559-residue polypeptide: 2-isopropylmalate synthase (559 aa).

The 275-residue stretch at proline 30 to lysine 304 folds into the Pyruvate carboxyltransferase domain. Aspartate 39, histidine 243, histidine 245, and asparagine 279 together coordinate Mg(2+). Residues valine 436–serine 559 are regulatory domain.

The protein belongs to the alpha-IPM synthase/homocitrate synthase family. LeuA type 2 subfamily. In terms of assembly, homodimer. Mg(2+) serves as cofactor.

It is found in the cytoplasm. It catalyses the reaction 3-methyl-2-oxobutanoate + acetyl-CoA + H2O = (2S)-2-isopropylmalate + CoA + H(+). It participates in amino-acid biosynthesis; L-leucine biosynthesis; L-leucine from 3-methyl-2-oxobutanoate: step 1/4. Functionally, catalyzes the condensation of the acetyl group of acetyl-CoA with 3-methyl-2-oxobutanoate (2-ketoisovalerate) to form 3-carboxy-3-hydroxy-4-methylpentanoate (2-isopropylmalate). The polypeptide is 2-isopropylmalate synthase (Alcanivorax borkumensis (strain ATCC 700651 / DSM 11573 / NCIMB 13689 / SK2)).